Consider the following 196-residue polypeptide: Holliday junction branch migration complex subunit RuvA (196 aa).

Residues 1–63 form a domain I region; it reads MINKIYGKII…EDEIKLFGFL (63 aa). The interval 64–138 is domain II; that stretch reads NVSEREVFEE…GKLVKADELT (75 aa). A region of interest (flexible linker) is located at residue threonine 138. Residues 139–196 are domain III; that stretch reads SSVFKFKDLEQSIVNMGFDRKLVVAAIKEIMLIDEFLMLREVEQEQFLFRETLKRLSG.

Belongs to the RuvA family. As to quaternary structure, homotetramer. Forms an RuvA(8)-RuvB(12)-Holliday junction (HJ) complex. HJ DNA is sandwiched between 2 RuvA tetramers; dsDNA enters through RuvA and exits via RuvB. An RuvB hexamer assembles on each DNA strand where it exits the tetramer. Each RuvB hexamer is contacted by two RuvA subunits (via domain III) on 2 adjacent RuvB subunits; this complex drives branch migration. In the full resolvosome a probable DNA-RuvA(4)-RuvB(12)-RuvC(2) complex forms which resolves the HJ.

The protein resides in the cytoplasm. Functionally, the RuvA-RuvB-RuvC complex processes Holliday junction (HJ) DNA during genetic recombination and DNA repair, while the RuvA-RuvB complex plays an important role in the rescue of blocked DNA replication forks via replication fork reversal (RFR). RuvA specifically binds to HJ cruciform DNA, conferring on it an open structure. The RuvB hexamer acts as an ATP-dependent pump, pulling dsDNA into and through the RuvAB complex. HJ branch migration allows RuvC to scan DNA until it finds its consensus sequence, where it cleaves and resolves the cruciform DNA. This Borrelia hermsii (strain HS1 / DAH) protein is Holliday junction branch migration complex subunit RuvA.